Reading from the N-terminus, the 555-residue chain is Small ribosomal subunit protein uS3m (555 aa).

The tract at residues 1–20 is disordered; that stretch reads MARKGNPISVRLGKNRSSDS.

The protein belongs to the universal ribosomal protein uS3 family.

The protein resides in the mitochondrion. This chain is Small ribosomal subunit protein uS3m (RPS3), found in Brassica napus (Rape).